A 106-amino-acid chain; its full sequence is Oncosphere antigen B (106 aa).

One can recognise a Fibronectin type-III domain in the interval 11–106 (LPQHFRWSQV…QSELRSMCIK (96 aa)).

This Hydatigena taeniaeformis (Feline tapeworm) protein is Oncosphere antigen B (ONCB).